The following is a 617-amino-acid chain: Cytoplasmic polyadenylation element-binding protein 1 (617 aa).

Residues 1 to 38 are disordered; sequence MQSQLKACGDAPAPSCSLHHRRTISKKPSNGGNSGGGG. RRM domains are found at residues 273-377 and 394-465; these read RKVF…AWRL and RTVF…HADT. Disordered regions lie at residues 534-568 and 592-617; these read DQTR…QNVT and NQNN…AIGY. Residues 542-563 are compositionally biased toward basic residues; the sequence is PPHHSTSHYHHRSTPSHHHNHT.

In terms of assembly, interacts with fbf-1.

Its function is as follows. Cytoplasmic polyadenylation element binding protein that binds to and regulates the translation of specific mRNAs. Essential for progression through meiosis. Involved in spermatogenesis. This is Cytoplasmic polyadenylation element-binding protein 1 (cpb-1) from Caenorhabditis japonica.